Here is a 291-residue protein sequence, read N- to C-terminus: Mitochondrial citrate transporter B (291 aa).

3 Solcar repeats span residues 10-97 (PQKW…IKNS), 105-193 (LSPA…LKES), and 201-283 (PTLF…MTYL). 6 helical membrane passes run 16–36 (LIAG…FEYA), 74–94 (STLI…YDTI), 112–132 (VAGV…TERI), 172–192 (TTLK…ILKE), 203–220 (LFTT…TVYA), and 255–276 (FWKG…VFSV).

Belongs to the mitochondrial carrier (TC 2.A.29) family.

It localises to the mitochondrion inner membrane. The catalysed reaction is citrate(in) + H(+)(in) = citrate(out) + H(+)(out). Functionally, mitochondrial transporter that mediates citrate export from mitochondria to cytoplasm. Both ctpA, ctpB, and ctpD play important roles in citric acid transport across the mitochondrial membrane and function in a redundant manner. The protein is Mitochondrial citrate transporter B of Aspergillus niger (strain ATCC 1015 / CBS 113.46 / FGSC A1144 / LSHB Ac4 / NCTC 3858a / NRRL 328 / USDA 3528.7).